Here is a 267-residue protein sequence, read N- to C-terminus: Hydroxyethylthiazole kinase (267 aa).

M46 lines the substrate pocket. Residues R121 and T167 each contribute to the ATP site. A194 lines the substrate pocket.

The protein belongs to the Thz kinase family. Requires Mg(2+) as cofactor.

The enzyme catalyses 5-(2-hydroxyethyl)-4-methylthiazole + ATP = 4-methyl-5-(2-phosphooxyethyl)-thiazole + ADP + H(+). The protein operates within cofactor biosynthesis; thiamine diphosphate biosynthesis; 4-methyl-5-(2-phosphoethyl)-thiazole from 5-(2-hydroxyethyl)-4-methylthiazole: step 1/1. In terms of biological role, catalyzes the phosphorylation of the hydroxyl group of 4-methyl-5-beta-hydroxyethylthiazole (THZ). This is Hydroxyethylthiazole kinase from Rhizobium johnstonii (strain DSM 114642 / LMG 32736 / 3841) (Rhizobium leguminosarum bv. viciae).